The primary structure comprises 341 residues: Paired box protein Pax-9 (341 aa).

Residues 4–130 constitute a DNA-binding region (paired); sequence AFGEVNQLGG…SSISRILRNK (127 aa). The tract at residues 7-63 is PAI subdomain; it reads EVNQLGGVFVNGRPLPNAIRLRIVELAQLGIRPCDISRQLRVSHGCVSKILARYNET. An RED subdomain region spans residues 82–130; sequence TVVKHIRTYKQRDPGIFAWEIRDRLLADGVCDKYNVPSVSSISRILRNK. Positions 168–189 are interaction with KDM5B; that stretch reads AAAAKVPTPPGVPAIPGSVAMP.

As to quaternary structure, interacts with KDM5B.

The protein localises to the nucleus. Transcription factor required for normal development of thymus, parathyroid glands, ultimobranchial bodies, teeth, skeletal elements of skull and larynx as well as distal limbs. The sequence is that of Paired box protein Pax-9 (PAX9) from Callithrix jacchus (White-tufted-ear marmoset).